The sequence spans 181 residues: Lysozyme A (181 aa).

A signal peptide spans 1–19 (MRIAFFLLVLAVIIGFAYG). A propeptide spanning residues 139–181 (LTDSRPLGPFNVTESEMAQLFIDHEIAMAQCEAEKTCNGFDLE) is cleaved from the precursor.

It belongs to the dictyostelium lysozyme family. In terms of processing, contains six disulfide bonds.

The protein localises to the cytoplasmic vesicle lumen. It catalyses the reaction Hydrolysis of 1,4-beta-linkages between N-acetylmuramic acid and N-acetyl-D-glucosamine residues in a peptidoglycan.. Has antibacterial activity against the Gram-positive bacteria B.subtilis, B.megaterium and M.luteus. No antibacterial activity detected against the Gram-positive bacterium S.aureus or against the Gram-negative bacterium E.coli. Lacks chitinase activity. This Dictyostelium discoideum (Social amoeba) protein is Lysozyme A.